The sequence spans 302 residues: MSEDEEKVKLRRLEPAIQKFTKIVIPTDLERLRKHQINIEKYQRCRVWDKLHEEHINAGRTVQQLRSNIREMEKLCLKVRKDDLGLLKRMIDPVKEEASAATAEFLQLHLESVEELKKQFNDEETFLQPSLTRSMTVGGTFHSTEDEADPQSMTQIYALPEIPRDQNAAESWETLEADLIELSQLVTDFSLLVNSQQEKIDSIEDHVNTAAVNVEEGTKNLGKAAKYKLAALPVAGALIGGVVGGPIGLLAGFKVAGIAAALGGGVLGFTGGKLIQRRKQKMMEKLASSCPDLPSQTDKKCS.

An N-acetylserine modification is found at S2. Residues 2–228 (SEDEEKVKLR…KNLGKAAKYK (227 aa)) lie on the Cytoplasmic side of the membrane. At K41 the chain carries N6-acetyllysine. Residues 53 to 123 (EEHINAGRTV…EELKKQFNDE (71 aa)) are a coiled coil. Y157 is subject to Phosphotyrosine; by ABL1. Positions 162 to 224 (IPRDQNAAES…EEGTKNLGKA (63 aa)) constitute a t-SNARE coiled-coil homology domain. Residues 229 to 249 (LAALPVAGALIGGVVGGPIGL) traverse the membrane as a helical segment. Positions 229–275 (LAALPVAGALIGGVVGGPIGLLAGFKVAGIAAALGGGVLGFTGGKLI) are necessary and sufficient for localization to autophagosome. The Lumenal portion of the chain corresponds to 250 to 254 (LAGFK). Residues 255-275 (VAGIAAALGGGVLGFTGGKLI) form a helical membrane-spanning segment. At 276 to 302 (QRRKQKMMEKLASSCPDLPSQTDKKCS) the chain is on the cytoplasmic side. S289 bears the Phosphoserine mark. The Endoplasmic reticulum retention signal motif lies at 299–302 (KKCS).

This sequence belongs to the syntaxin family. Forms a SNARE complex composed of VAMP8, SNAP29 and STX17 involved in fusion of autophagosome with lysosome. May interact with VTI1B. Probably interacts with BET1, SCFD1 and SEC22B. Interacts with PTPN2 and ABL1; involved in STX17 phosphorylation. Interacts with COPB1. Interacts with TMED9 and TMED10; the interaction is direct. Interacts with VAMP7. Interacts with RUBCNL/PACER; promoting targeting of RUBCNL/PACER to autophagosome. Interacts with VAMP8, SNAP29, VPS39 and VPS41; these interactions are increased in the absence of TMEM39A. Interacts with IRGM; promoting STX17 recruitment to autophagosomes. Interacts with ATG8 proteins GABARAP and MAP1LC3B. Interacts with RNF115; this interaction enhances STX17 stability which in turn promotes autophagosome maturation. Interacts with RAB39A (GTP-bound); the interaction promotes autophagosome-lysosome membrane fusion driven by STX17-SNAP29-VAMP8. Interacts with RAB39B; the interaction may promote a different fonction in autophagy as compared with RAB39A. Phosphorylated at Tyr-157 probably by ABL1. Dephosphorylation by PTPN2; regulates exit from the endoplasmic reticulum.

Its subcellular location is the endoplasmic reticulum membrane. It is found in the smooth endoplasmic reticulum membrane. The protein localises to the endoplasmic reticulum-Golgi intermediate compartment membrane. The protein resides in the cytoplasmic vesicle. It localises to the autophagosome membrane. Its subcellular location is the COPII-coated vesicle membrane. It is found in the cytoplasm. The protein localises to the cytosol. The protein resides in the mitochondrion membrane. It localises to the autolysosome membrane. Its function is as follows. SNAREs, soluble N-ethylmaleimide-sensitive factor-attachment protein receptors, are essential proteins for fusion of cellular membranes. SNAREs localized on opposing membranes assemble to form a trans-SNARE complex, an extended, parallel four alpha-helical bundle that drives membrane fusion. STX17 is a SNARE of the autophagosome involved in autophagy through the direct control of autophagosome membrane fusion with the lysosome membrane. May also play a role in the early secretory pathway where it may maintain the architecture of the endoplasmic reticulum-Golgi intermediate compartment/ERGIC and Golgi and/or regulate transport between the endoplasmic reticulum, the ERGIC and the Golgi. The protein is Syntaxin-17 of Bos taurus (Bovine).